The sequence spans 237 residues: Lipoprotein-releasing system ATP-binding protein LolD (237 aa).

The region spanning 16–237 is the ABC transporter domain; the sequence is LKCEGLTRIY…LDQGRLSEDA (222 aa). 52 to 59 contacts ATP; sequence GSSGSGKT.

The protein belongs to the ABC transporter superfamily. Lipoprotein translocase (TC 3.A.1.125) family. The complex is composed of two ATP-binding proteins (LolD) and two transmembrane proteins (LolC and LolE).

It is found in the cell inner membrane. Its function is as follows. Part of the ABC transporter complex LolCDE involved in the translocation of mature outer membrane-directed lipoproteins, from the inner membrane to the periplasmic chaperone, LolA. Responsible for the formation of the LolA-lipoprotein complex in an ATP-dependent manner. In Chromohalobacter salexigens (strain ATCC BAA-138 / DSM 3043 / CIP 106854 / NCIMB 13768 / 1H11), this protein is Lipoprotein-releasing system ATP-binding protein LolD.